Here is a 379-residue protein sequence, read N- to C-terminus: F-box protein At5g18160 (379 aa).

A disordered region spans residues 1–26 (MDKQDEKKQGTTKSSSTLTTRCSHGN). Polar residues predominate over residues 11–26 (TTKSSSTLTTRCSHGN). One can recognise an F-box domain in the interval 28–74 (ISQSNSIPLDITIEILSRLPAKSIVRSRSVSKLWSSITTTPEFIKHR).

The protein is F-box protein At5g18160 of Arabidopsis thaliana (Mouse-ear cress).